Here is a 474-residue protein sequence, read N- to C-terminus: Probable multidrug resistance protein NorM (474 aa).

A run of 12 helical transmembrane segments spans residues 33–50, 65–87, 108–130, 150–172, 179–201, 211–233, 258–280, 295–317, 334–356, 376–398, 410–432, and 436–458; these read LWLA…IAMM, VAAA…GLVS, SLRV…QLYG, YLDG…GLMG, PALW…LIHG, FGAG…VVCV, LLQL…GAAA, QIAL…AATV, AGFA…VALT, TLTA…QVVA, VPLL…VLGF, and LGPF…LLVW.

It belongs to the multi antimicrobial extrusion (MATE) (TC 2.A.66.1) family.

The protein resides in the cell inner membrane. Functionally, multidrug efflux pump. The polypeptide is Probable multidrug resistance protein NorM (norM) (Rhodopseudomonas palustris (strain ATCC BAA-98 / CGA009)).